The following is a 348-amino-acid chain: MSDDKSKALAAALAQIEKSFGKGAIMKMDGSQQEENLEVISTGSLGLDLALGVGGLPRGRIVEIFGPESSGKTTLCLEAVAQCQKNGGVCAFVDAEHAFDPVYARKLGVKVEELYLSQPDTGEQALEICDTLVRSGGIDMVVVDSVAALVPKAEIEGDMGDSHVGLQARLMSQALRKLTGHIKKTNTLVVFINQIRMKIGVMFGSPETTTGGNALKFYSSVRLDIRRTGSIKKGEEVLGNETRVKVIKNKVAPPFRQAEFDILYGEGISWEGELIDIGVKNDIINKSGAWYSYNGAKIGQGKDNVRVWLKENPEIADEIDAKIRALNGIEMHITEGTQDETDGERPEE.

Residue 66-73 (GPESSGKT) coordinates ATP.

This sequence belongs to the RecA family.

It is found in the cytoplasm. In terms of biological role, can catalyze the hydrolysis of ATP in the presence of single-stranded DNA, the ATP-dependent uptake of single-stranded DNA by duplex DNA, and the ATP-dependent hybridization of homologous single-stranded DNAs. It interacts with LexA causing its activation and leading to its autocatalytic cleavage. In Neisseria meningitidis serogroup C / serotype 2a (strain ATCC 700532 / DSM 15464 / FAM18), this protein is Protein RecA.